The following is a 442-amino-acid chain: Putative arsenical pump membrane protein (442 aa).

Helical transmembrane passes span 22–42 (IPAT…LADL), 56–76 (ILAT…YWVA), 85–105 (GSGI…TIFL), 107–127 (NDGS…YLGL), 136–156 (LLSG…SNIV), 174–194 (MMFV…FMFF), 250–270 (LFAA…GSFI), 294–314 (IFIF…IGFT), 328–347 (SLAH…SNLF), 378–398 (IIGS…TLIW), and 419–439 (IIII…WISW).

The protein belongs to the ArsB family.

Its subcellular location is the cell membrane. The sequence is that of Putative arsenical pump membrane protein (ywrK) from Bacillus subtilis (strain 168).